The sequence spans 195 residues: Dephospho-CoA kinase (195 aa).

The DPCK domain maps to 3–195 (KIGLTGGIGS…ANMKNVIAEI (193 aa)). An ATP-binding site is contributed by 11-16 (GSGKST).

The protein belongs to the CoaE family.

It localises to the cytoplasm. It catalyses the reaction 3'-dephospho-CoA + ATP = ADP + CoA + H(+). It participates in cofactor biosynthesis; coenzyme A biosynthesis; CoA from (R)-pantothenate: step 5/5. Its function is as follows. Catalyzes the phosphorylation of the 3'-hydroxyl group of dephosphocoenzyme A to form coenzyme A. The sequence is that of Dephospho-CoA kinase from Corynebacterium glutamicum (Brevibacterium saccharolyticum).